Here is a 150-residue protein sequence, read N- to C-terminus: Deoxyuridine 5'-triphosphate nucleotidohydrolase (150 aa).

Substrate-binding positions include 70–72, N82, 86–88, and M96; these read RSG and LID.

Belongs to the dUTPase family. Mg(2+) serves as cofactor.

It carries out the reaction dUTP + H2O = dUMP + diphosphate + H(+). Its pathway is pyrimidine metabolism; dUMP biosynthesis; dUMP from dCTP (dUTP route): step 2/2. Its function is as follows. This enzyme is involved in nucleotide metabolism: it produces dUMP, the immediate precursor of thymidine nucleotides and it decreases the intracellular concentration of dUTP so that uracil cannot be incorporated into DNA. In Baumannia cicadellinicola subsp. Homalodisca coagulata, this protein is Deoxyuridine 5'-triphosphate nucleotidohydrolase.